Reading from the N-terminus, the 314-residue chain is MKRAPTKQPAKPAARGGERAQGRVIAAHGRHYIVAPADGGPMLQCFPRRKKSEVAVGDRVAYERTSADQGVIVEIGERRNLLYRSDQFKSKLFAANLDQLLIVLATEPYFSEDLLGRALIAAEANELKPIVVLNKIDVEAALPVARERLAPYRALGYDVLELSVKSAPDDARTQLAPRLAGHSTILLGQSGMGKSTLVNLLVPNAEAATREISAALNSGRHTTTFTRLYPLQDGGALIDSPGFQEFGLYHLTEGRLERAFPEFRPLLAHCRFYNCHHLHEPGCAILEALADGRIAPTRHALYAQLVHEASQIVR.

The tract at residues 1–21 (MKRAPTKQPAKPAARGGERAQ) is disordered. The CP-type G domain occupies 85–246 (SDQFKSKLFA…LIDSPGFQEF (162 aa)). GTP is bound by residues 134–137 (NKID) and 188–196 (GQSGMGKST). Zn(2+)-binding residues include cysteine 270, cysteine 275, histidine 277, and cysteine 283.

The protein belongs to the TRAFAC class YlqF/YawG GTPase family. RsgA subfamily. Monomer. Associates with 30S ribosomal subunit, binds 16S rRNA. It depends on Zn(2+) as a cofactor.

The protein localises to the cytoplasm. Its function is as follows. One of several proteins that assist in the late maturation steps of the functional core of the 30S ribosomal subunit. Helps release RbfA from mature subunits. May play a role in the assembly of ribosomal proteins into the subunit. Circularly permuted GTPase that catalyzes slow GTP hydrolysis, GTPase activity is stimulated by the 30S ribosomal subunit. In Burkholderia mallei (strain ATCC 23344), this protein is Small ribosomal subunit biogenesis GTPase RsgA.